The primary structure comprises 205 residues: MMRTLITTHPLPLLLLPQQLLQPVQFQEVDTDFDFPEEDKKEDFEEYLEQFFSTGPTRPPTKEKVKRRVLIESGMPLNHIEYCTHEIMGKNVYYKHRCVAERYFLLMQYDELQKICYNRFVPCKNGIRKCNRSKGLVEGVYCNLTEAFEIPACKYESLYRKGYVLITCSWQNEMQKRIPHTINDLVEPPEHRSFLSEDGVFVIPP.

The first 26 residues, 1 to 26 (MMRTLITTHPLPLLLLPQQLLQPVQF), serve as a signal peptide directing secretion. 3 cysteine pairs are disulfide-bonded: Cys-98–Cys-153, Cys-116–Cys-168, and Cys-123–Cys-130. N-linked (GlcNAc...) asparagine glycans are attached at residues Asn-131 and Asn-143.

Belongs to the pancreatic ribonuclease family.

It is found in the secreted. Functionally, does not exhibit any ribonuclease activity. The chain is Inactive ribonuclease-like protein 9 (RNASE9) from Pan troglodytes (Chimpanzee).